The following is a 278-amino-acid chain: Large ribosomal subunit protein uL2c (278 aa).

The tract at residues 224–267 (VVMNPVDHPHGGGEGRAPIGRKKPLTPWGHTALGGRSRKNHKYS) is disordered.

This sequence belongs to the universal ribosomal protein uL2 family. Part of the 50S ribosomal subunit.

The protein localises to the plastid. The protein resides in the chloroplast. This chain is Large ribosomal subunit protein uL2c (rpl2), found in Huperzia lucidula (Shining clubmoss).